The following is a 2151-amino-acid chain: Protein PRR14L (2151 aa).

2 stretches are compositionally biased toward basic and acidic residues: residues 112–123 and 134–154; these read KRSESMEPKVFR and EPSEGAKEDPHQHSTAAEEKT. Disordered regions lie at residues 112–160, 206–225, and 314–350; these read KRSE…SQED, GTKTDNNEGHKNGNVSKDLS, and QLHGHHNEQPSSTHDSPTATSPLKENSEVSCFTSDLS. Ser-157 is modified (phosphoserine). Residues 322-350 are compositionally biased toward polar residues; that stretch reads QPSSTHDSPTATSPLKENSEVSCFTSDLS. 2 positions are modified to phosphoserine: Ser-582 and Ser-945. The disordered stretch occupies residues 974-1017; it reads SNQNRPDECKSEGQSAKEMLSSDQRETVTEPHGEVNHNQKDLLV. Over residues 996 to 1013 the composition is skewed to basic and acidic residues; it reads DQRETVTEPHGEVNHNQK. A Phosphoserine modification is found at Ser-1029. Positions 1091 to 1103 are enriched in basic and acidic residues; that stretch reads DSRSTLSRRELDA. Disordered stretches follow at residues 1091-1115, 1178-1226, 1782-1802, and 1986-2012; these read DSRSTLSRRELDAAHTGTTGQDSDF, DSHY…SCHD, TGVHSQTHTQAPPQPPAPLQD, and AACPCPQSSPPEQKEAEPEKRPKKVSQ. Residues 1178-1187 show a composition bias toward polar residues; the sequence is DSHYGQQDKG. Positions 1188–1201 are enriched in basic and acidic residues; the sequence is TSLRETQEMTEGSR.

This is Protein PRR14L (PRR14L) from Homo sapiens (Human).